Reading from the N-terminus, the 259-residue chain is Snake venom serine protease homolog rhinocerase 3 (259 aa).

The signal sequence occupies residues 1–17 (VLIRVLANLLLLQLSYA). Positions 18 to 23 (QESSEL) are excised as a propeptide. The 227-residue stretch at 24-250 (VIGGDECDIN…YTDWIEGIIA (227 aa)) folds into the Peptidase S1 domain. Cystine bridges form between C30/C164, C51/C67, C99/C257, C143/C211, C175/C190, and C201/C226. N80 is a glycosylation site (N-linked (GlcNAc...) asparagine). The N-linked (GlcNAc...) asparagine glycan is linked to N252.

It belongs to the peptidase S1 family. Snake venom subfamily. In terms of tissue distribution, expressed by the venom gland.

It is found in the secreted. In terms of biological role, snake venom serine protease homolog that may act in the hemostasis system of the prey. In Bitis rhinoceros (West African gaboon viper), this protein is Snake venom serine protease homolog rhinocerase 3.